We begin with the raw amino-acid sequence, 419 residues long: Oxamate carbamoyltransferase subunit AllG (419 aa).

This sequence belongs to the AllG family. In terms of assembly, the OXTCase is composed of 3 subunits, AllF, AllG and AllH. The cofactor is Mg(2+).

It catalyses the reaction oxamate + carbamoyl phosphate = N-carbamoyl-2-oxoglycine + phosphate. Its pathway is nitrogen metabolism; (S)-allantoin degradation. Component of a carbamoyltransferase involved in the anaerobic nitrogen utilization via the assimilation of allantoin. Catalyzes the conversion of oxalurate (N-carbamoyl-2-oxoglycine) to oxamate and carbamoyl phosphate. The sequence is that of Oxamate carbamoyltransferase subunit AllG from Escherichia coli (strain K12).